Here is a 701-residue protein sequence, read N- to C-terminus: Probable cytosolic oligopeptidase A (701 aa).

The residue at position 2 (Ala2) is an N-acetylalanine. A coiled-coil region spans residues 148-194 (IALEDDKREEFNKIEQELEKLSHKFSENVLDATKKFEKLITDKKEIE). His483 lines the Zn(2+) pocket. Residue Glu484 is part of the active site. 2 residues coordinate Zn(2+): His487 and Glu513. 615-621 (HIFAGGY) provides a ligand contact to substrate.

It belongs to the peptidase M3 family. Requires Zn(2+) as cofactor.

Its subcellular location is the cytoplasm. It localises to the cytosol. The enzyme catalyses Hydrolysis of oligopeptides, with broad specificity. Gly or Ala commonly occur as P1 or P1' residues, but more distant residues are also important, as is shown by the fact that Z-Gly-Pro-Gly-|-Gly-Pro-Ala is cleaved, but not Z-(Gly)(5).. With respect to regulation, inhibited by salicylic acid. Functionally, oligopeptidase that may be involved in the degradation of proteasome-generated peptides. Binds salicylic acid. The polypeptide is Probable cytosolic oligopeptidase A (Arabidopsis thaliana (Mouse-ear cress)).